The chain runs to 279 residues: Large ribosomal subunit protein mL46 (279 aa).

Lysine 230 is subject to N6-acetyllysine.

The protein belongs to the mitochondrion-specific ribosomal protein mL46 family. In terms of assembly, component of the mitochondrial large ribosomal subunit (mt-LSU). Mature mammalian 55S mitochondrial ribosomes consist of a small (28S) and a large (39S) subunit. The 28S small subunit contains a 12S ribosomal RNA (12S mt-rRNA) and 30 different proteins. The 39S large subunit contains a 16S rRNA (16S mt-rRNA), a copy of mitochondrial valine transfer RNA (mt-tRNA(Val)), which plays an integral structural role, and 52 different proteins. mL46 is located at the central protuberance.

It is found in the mitochondrion. The polypeptide is Large ribosomal subunit protein mL46 (MRPL46) (Homo sapiens (Human)).